The chain runs to 172 residues: Female-specific lacrimal gland protein (172 aa).

The signal sequence occupies residues 1-16 (MVKFLLLALALGVSCA). Disulfide bonds link C60/C64 and C79/C170.

Belongs to the calycin superfamily. Lipocalin family. Expressed in the lacrimal gland from where it is secreted into tears (at protein level).

The protein resides in the secreted. The sequence is that of Female-specific lacrimal gland protein from Mesocricetus auratus (Golden hamster).